We begin with the raw amino-acid sequence, 647 residues long: Pumilio homolog 3 (647 aa).

Residues Met1–Thr10 are compositionally biased toward basic residues. The tract at residues Met1 to Arg123 is disordered. Lys33 carries the post-translational modification N6-acetyllysine. The span at Pro59 to Lys68 shows a compositional bias: basic residues. Residues Ser102–Arg123 are compositionally biased toward basic and acidic residues. The Nuclear localization signal motif lies at Lys105–Lys117. The PUM-HD domain maps to Glu142–Leu509. Pumilio repeat units lie at residues His176–Ala211, Lys212–His247, Ser248–Gly276, Pro288–His324, Ser325–Thr360, His361–Gly396, Gln397–Asp434, Lys435–Asp503, Lys504–His550, Pro551–Ile595, and Asn596–Ser635.

As to quaternary structure, interacts with PARP1 (via catalytic domain). In the adult eye, expressed primarily in retinal ganglion cells and, to a lesser extent, in the pigmented cells.

It is found in the nucleus. It localises to the nucleolus. The protein localises to the nucleoplasm. The protein resides in the chromosome. Functionally, inhibits the poly(ADP-ribosyl)ation activity of PARP1 and the degradation of PARP1 by CASP3 following genotoxic stress. Binds to double-stranded RNA or DNA without sequence specificity. Involved in development of the eye and of primordial germ cells. This chain is Pumilio homolog 3, found in Mus musculus (Mouse).